The sequence spans 310 residues: tRNA-5-methyluridine(54) 2-sulfurtransferase (310 aa).

Residues Cys-3, Cys-6, Cys-22, and His-25 each coordinate Zn(2+). 2 residues coordinate ATP: Ala-53 and Ile-79. [4Fe-4S] cluster-binding residues include Cys-128 and Cys-131. An intrachain disulfide couples Cys-128 to Cys-220. 2 residues coordinate ATP: Lys-135 and Gly-154. Cys-220 is a [4Fe-4S] cluster binding site. Cys-272, Cys-275, Cys-284, and Cys-287 together coordinate Zn(2+).

Belongs to the TtcA family. TtuA subfamily. As to quaternary structure, homodimer. Requires [4Fe-4S] cluster as cofactor. It depends on Mg(2+) as a cofactor.

It catalyses the reaction 5-methyluridine(54) in tRNA + hydrogen sulfide + ATP = 5-methyl-2-thiouridine(54) in tRNA + AMP + diphosphate. Its pathway is tRNA modification. Its function is as follows. Catalyzes the ATP-dependent 2-thiolation of 5-methyluridine residue at position 54 in the T loop of tRNAs, leading to 5-methyl-2-thiouridine (m(5)s(2)U or s(2)T). This modification allows thermal stabilization of tRNAs in thermophilic microorganisms, and is required for cell growth at high temperatures. Can use free sulfide as sulfur source in vitro, which may be also the sulfur source in vivo. This is tRNA-5-methyluridine(54) 2-sulfurtransferase from Pyrococcus horikoshii (strain ATCC 700860 / DSM 12428 / JCM 9974 / NBRC 100139 / OT-3).